The chain runs to 172 residues: VQ motif-containing protein 17 (172 aa).

The VQ signature appears at 51–60 (FREIVQNLTG). Residues 60-97 (GKQDHHHHDLPHQKGLKRNPRSRRSHDHHEVHDMNKSH) form a disordered region. Positions 61 to 71 (KQDHHHHDLPH) are enriched in basic and acidic residues. The segment covering 72-85 (QKGLKRNPRSRRSH) has biased composition (basic residues). Residues 86–95 (DHHEVHDMNK) are compositionally biased toward basic and acidic residues.

The protein localises to the nucleus. May function as positive regulator of plant growth. This is VQ motif-containing protein 17 from Arabidopsis thaliana (Mouse-ear cress).